The chain runs to 272 residues: Putative hydro-lyase BBta_2883 (272 aa).

This sequence belongs to the D-glutamate cyclase family.

The protein is Putative hydro-lyase BBta_2883 of Bradyrhizobium sp. (strain BTAi1 / ATCC BAA-1182).